A 270-amino-acid polypeptide reads, in one-letter code: 3-phenylpropionate-dihydrodiol/cinnamic acid-dihydrodiol dehydrogenase (270 aa).

10–34 is an NAD(+) binding site; the sequence is FITGGGSGLGLALVERFIEKGAQVA. Residue Ser143 participates in substrate binding. Tyr156 functions as the Proton acceptor in the catalytic mechanism.

The protein belongs to the short-chain dehydrogenases/reductases (SDR) family.

The enzyme catalyses 3-(cis-5,6-dihydroxycyclohexa-1,3-dien-1-yl)propanoate + NAD(+) = 3-(2,3-dihydroxyphenyl)propanoate + NADH + H(+). The catalysed reaction is (2E)-3-(cis-5,6-dihydroxycyclohexa-1,3-dien-1-yl)prop-2-enoate + NAD(+) = (2E)-3-(2,3-dihydroxyphenyl)prop-2-enoate + NADH + H(+). The protein operates within aromatic compound metabolism; 3-phenylpropanoate degradation. Converts 3-phenylpropionate-dihydrodiol (PP-dihydrodiol) and cinnamic acid-dihydrodiol (CI-dihydrodiol) into 3-(2,3-dihydroxylphenyl)propanoic acid (DHPP) and 2,3-dihydroxicinnamic acid (DHCI), respectively. The sequence is that of 3-phenylpropionate-dihydrodiol/cinnamic acid-dihydrodiol dehydrogenase (hcaB) from Escherichia coli.